Consider the following 183-residue polypeptide: Transcription factor 15 (183 aa).

The tract at residues 24 to 46 is disordered; it reads DEENRSESDTSDQSYGCCEGAEA. The region spanning 61–113 is the bHLH domain; the sequence is KQRQAANARERDRTQSVNTAFTALRTLIPTEPVDRKLSKIETLRLASSYIAHL.

In terms of assembly, heterodimer; efficient DNA binding requires dimerization with another bHLH protein.

It is found in the nucleus. Its function is as follows. Early transcription factor that plays a key role in somitogenesis, paraxial mesoderm development and regulation of stem cell pluripotency. Essential for the mesenchymal to epithelial transition associated with somite formation. Required for somite morphogenesis, thereby regulating patterning of the axial skeleton and skeletal muscles. Also plays a key role in regulation of stem cell pluripotency. Promotes pluripotency exit of embryonic stem cells (ESCs) by priming ESCs for differentiation. Acts as a key regulator of self-renewal of hematopoietic stem cells (HSCs) by mediating HSCs quiescence and long-term self-renewal. Acts by forming a heterodimer with another helix-loop-helix (bHLH) protein, that binds DNA on E-box motifs (5'-CANNTG-3') and activates transcription of target genes. This chain is Transcription factor 15 (TCF15), found in Gallus gallus (Chicken).